The primary structure comprises 375 residues: Glutamate 5-kinase (375 aa).

Lys17 contacts ATP. Substrate is bound by residues Ser57, Asp144, and Asn158. 178 to 179 contacts ATP; that stretch reads TD. The PUA domain occupies 284 to 360; sequence SGSIVVDTGA…NEIADILGYK (77 aa).

The protein belongs to the glutamate 5-kinase family.

Its subcellular location is the cytoplasm. The enzyme catalyses L-glutamate + ATP = L-glutamyl 5-phosphate + ADP. The protein operates within amino-acid biosynthesis; L-proline biosynthesis; L-glutamate 5-semialdehyde from L-glutamate: step 1/2. In terms of biological role, catalyzes the transfer of a phosphate group to glutamate to form L-glutamate 5-phosphate. The sequence is that of Glutamate 5-kinase from Methanococcoides burtonii (strain DSM 6242 / NBRC 107633 / OCM 468 / ACE-M).